The following is a 219-amino-acid chain: 2,5-diamino-6-ribosylamino-4(3H)-pyrimidinone 5'-phosphate reductase (219 aa).

Residues Thr-52, Asp-56, 87–90 (SRCR), Val-134, and 156–159 (GGTL) each bind NADP(+).

This sequence belongs to the HTP reductase family. Homodimer.

It catalyses the reaction 2,5-diamino-6-(1-D-ribitylamino)pyrimidin-4(3H)-one 5'-phosphate + NADP(+) = 2,5-diamino-6-(1-D-ribosylamino)pyrimidin-4(3H)-one 5'-phosphate + NADPH + H(+). The enzyme catalyses 2,5-diamino-6-(1-D-ribitylamino)pyrimidin-4(3H)-one 5'-phosphate + NAD(+) = 2,5-diamino-6-(1-D-ribosylamino)pyrimidin-4(3H)-one 5'-phosphate + NADH + H(+). It participates in cofactor biosynthesis; riboflavin biosynthesis. Its function is as follows. Catalyzes an early step in riboflavin biosynthesis, the NADPH-dependent reduction of the ribose side chain of 2,5-diamino-6-ribosylamino-4(3H)-pyrimidinone 5'-phosphate, yielding 2,5-diamino-6-ribitylamino-4(3H)-pyrimidinone 5'-phosphate. This Archaeoglobus fulgidus (strain ATCC 49558 / DSM 4304 / JCM 9628 / NBRC 100126 / VC-16) protein is 2,5-diamino-6-ribosylamino-4(3H)-pyrimidinone 5'-phosphate reductase.